Here is a 511-residue protein sequence, read N- to C-terminus: Phosphomethylpyrimidine synthase (511 aa).

Residues asparagine 127, methionine 156, tyrosine 185, histidine 221, 241–243 (SRG), 282–285 (DGLR), and glutamate 321 each bind substrate. Histidine 325 serves as a coordination point for Zn(2+). Tyrosine 348 lines the substrate pocket. Histidine 389 contacts Zn(2+). Cysteine 469, cysteine 472, and cysteine 477 together coordinate [4Fe-4S] cluster. The disordered stretch occupies residues 492–511 (KGMEEKSEVTICNRKKESGK).

The protein belongs to the ThiC family. [4Fe-4S] cluster is required as a cofactor.

The catalysed reaction is 5-amino-1-(5-phospho-beta-D-ribosyl)imidazole + S-adenosyl-L-methionine = 4-amino-2-methyl-5-(phosphooxymethyl)pyrimidine + CO + 5'-deoxyadenosine + formate + L-methionine + 3 H(+). The protein operates within cofactor biosynthesis; thiamine diphosphate biosynthesis. Catalyzes the synthesis of the hydroxymethylpyrimidine phosphate (HMP-P) moiety of thiamine from aminoimidazole ribotide (AIR) in a radical S-adenosyl-L-methionine (SAM)-dependent reaction. This Leptospira borgpetersenii serovar Hardjo-bovis (strain JB197) protein is Phosphomethylpyrimidine synthase.